A 333-amino-acid polypeptide reads, in one-letter code: tRNA N6-adenosine threonylcarbamoyltransferase (333 aa).

The Fe cation site is built by H108 and H112. Residues 129-133 (LVSGG), D161, E178, and S258 contribute to the substrate site. A Fe cation-binding site is contributed by D286.

Belongs to the KAE1 / TsaD family. Fe(2+) serves as cofactor.

It localises to the cytoplasm. The catalysed reaction is L-threonylcarbamoyladenylate + adenosine(37) in tRNA = N(6)-L-threonylcarbamoyladenosine(37) in tRNA + AMP + H(+). Functionally, required for the formation of a threonylcarbamoyl group on adenosine at position 37 (t(6)A37) in tRNAs that read codons beginning with adenine. Is probably involved in the transfer of the threonylcarbamoyl moiety of threonylcarbamoyl-AMP (TC-AMP) to the N6 group of A37. The sequence is that of tRNA N6-adenosine threonylcarbamoyltransferase from Pyrobaculum islandicum (strain DSM 4184 / JCM 9189 / GEO3).